The following is a 348-amino-acid chain: Flagellar P-ring protein (348 aa).

The first 16 residues, 1–16, serve as a signal peptide directing secretion; that stretch reads MRVLTIFLLFMTSIFA.

Belongs to the FlgI family. The basal body constitutes a major portion of the flagellar organelle and consists of four rings (L,P,S, and M) mounted on a central rod.

The protein localises to the periplasm. Its subcellular location is the bacterial flagellum basal body. Functionally, assembles around the rod to form the L-ring and probably protects the motor/basal body from shearing forces during rotation. The protein is Flagellar P-ring protein of Campylobacter jejuni subsp. jejuni serotype O:23/36 (strain 81-176).